Consider the following 279-residue polypeptide: Urease accessory protein UreD (279 aa).

Belongs to the UreD family. In terms of assembly, ureD, UreF and UreG form a complex that acts as a GTP-hydrolysis-dependent molecular chaperone, activating the urease apoprotein by helping to assemble the nickel containing metallocenter of UreC. The UreE protein probably delivers the nickel.

It is found in the cytoplasm. In terms of biological role, required for maturation of urease via the functional incorporation of the urease nickel metallocenter. The sequence is that of Urease accessory protein UreD from Trichodesmium erythraeum (strain IMS101).